Consider the following 388-residue polypeptide: Gastricsin (388 aa).

Residues 1-16 (MKWMVVAFICLQLLEA) form the signal peptide. Positions 17–59 (TVVKVPLKKFKSIRETMKEKGLLWEFLKTHKHDPARKYRVSDL) are cleaved as a propeptide — activation peptide. The 313-residue stretch at 73–385 (YFGEISIGTP…DLGNNRVGFA (313 aa)) folds into the Peptidase A1 domain. Residue Asp91 is part of the active site. Intrachain disulfides connect Cys104-Cys109 and Cys267-Cys271. Residue Asp276 is part of the active site. Cysteines 310 and 343 form a disulfide.

This sequence belongs to the peptidase A1 family.

Its subcellular location is the secreted. The catalysed reaction is More restricted specificity than pepsin A, but shows preferential cleavage at Tyr-|-Xaa bonds. High activity on hemoglobin.. Its activity is regulated as follows. Inhibited by pepstatin. Hydrolyzes a variety of proteins. This Callithrix jacchus (White-tufted-ear marmoset) protein is Gastricsin (PGC).